A 398-amino-acid polypeptide reads, in one-letter code: Phosphoglycerate kinase (398 aa).

Residues 21–23 (DFN), R36, 59–62 (HLGR), R119, and R157 each bind substrate. ATP contacts are provided by residues K208, G296, E327, and 354-357 (GGDS).

The protein belongs to the phosphoglycerate kinase family. Monomer.

Its subcellular location is the cytoplasm. The enzyme catalyses (2R)-3-phosphoglycerate + ATP = (2R)-3-phospho-glyceroyl phosphate + ADP. It participates in carbohydrate degradation; glycolysis; pyruvate from D-glyceraldehyde 3-phosphate: step 2/5. The protein is Phosphoglycerate kinase of Streptococcus equi subsp. equi (strain 4047).